The chain runs to 404 residues: Advanced glycosylation end product-specific receptor (404 aa).

The first 22 residues, 1-22 (MAAGTAVGAWVLVLSLWGAVVG), serve as a signal peptide directing secretion. The Ig-like V-type domain maps to 23-116 (AQNITARIGE…KETKSNYRVR (94 aa)). Over 23–342 (AQNITARIGE…VGGSGLGTLA (320 aa)) the chain is Extracellular. N-linked (GlcNAc...) asparagine glycosylation is found at N25 and N81. 2 cysteine pairs are disulfide-bonded: C38-C99 and C144-C208. Ig-like C2-type domains lie at 124 to 221 (PEIV…RALR) and 227 to 317 (PRVW…RAVS). A helical transmembrane segment spans residues 343–363 (LALGILGGLGTAALLIGVILW). The Cytoplasmic segment spans residues 364-404 (QRRQRRGEERKAPENQEEEEERAELNQSEEPEAGESSTGGP). A disordered region spans residues 367 to 404 (QRRGEERKAPENQEEEEERAELNQSEEPEAGESSTGGP). Acidic residues predominate over residues 378 to 396 (NQEEEEERAELNQSEEPEA). S391 bears the Phosphoserine; by PKC/PRKCZ and ATM mark.

In terms of assembly, constitutive homodimer; disulfide-linked. Forms homooligomers. Interacts with S100A1 and APP. Interacts with S100B, S100A12 and S100A14. Interacts with TIRAP. Interacts with HMGB1. Interacts with LGP2; this interaction plays an important role in AGER-mediated pro-inflammatory responses and cytokine release. Interacts with double-strand break repair protein MRE11 which is a core component of the MRN complex. The interaction enhances MRE11 endonuclease activity and promotes DNA repair. Interacts with the MCM2-7 complex via interaction with complex member MCM2; the interaction is increased following DNA replication stress and stabilizes the MCM2-7 complex at replication forks. Interacts with longistatin, a protein from the saliva of the tick, Haemaphysalis longicornis; the interaction attenuates AGER-mediated production of reactive oxygen species (ROS), activation of NF-kappa-B and expression of adhesion molecules and cytokines in human endothelial cells. Post-translationally, phosphorylated on its cytoplasmic domain by PKCzeta/PRKCZ upon ligand binding. Phosphorylated by ATM following DNA damage. In terms of processing, targeted by the ubiquitin E3 ligase subunit FBXO10 to mediate its ubiquitination and degradation. As to expression, endothelial cells. Increased expression in pre-term labor and preeclampsia placentas compared to controls.

It is found in the cell membrane. The protein localises to the cell projection. The protein resides in the phagocytic cup. Its subcellular location is the early endosome. It localises to the nucleus. It is found in the secreted. Cell surface pattern recognition receptor that senses endogenous stress signals with a broad ligand repertoire including advanced glycation end products, S100 proteins, high-mobility group box 1 protein/HMGB1, amyloid beta/APP oligomers, nucleic acids, histones, phospholipids and glycosaminoglycans. Advanced glycosylation end products are nonenzymatically glycosylated proteins which accumulate in vascular tissue in aging and at an accelerated rate in diabetes. These ligands accumulate at inflammatory sites during the pathogenesis of various diseases including diabetes, vascular complications, neurodegenerative disorders and cancers, and RAGE transduces their binding into pro-inflammatory responses. Upon ligand binding, uses TIRAP and MYD88 as adapters to transduce the signal ultimately leading to the induction of inflammatory cytokines IL6, IL8 and TNFalpha through activation of NF-kappa-B. Interaction with S100A12 on endothelium, mononuclear phagocytes, and lymphocytes triggers cellular activation, with generation of key pro-inflammatory mediators. Interaction with S100B after myocardial infarction may play a role in myocyte apoptosis by activating ERK1/2 and p53/TP53 signaling. Contributes to the translocation of amyloid-beta peptide (ABPP) across the cell membrane from the extracellular to the intracellular space in cortical neurons. ABPP-initiated RAGE signaling, especially stimulation of p38 mitogen-activated protein kinase (MAPK), has the capacity to drive a transport system delivering ABPP as a complex with RAGE to the intraneuronal space. Participates in endothelial albumin transcytosis together with HMGB1 through the RAGE/SRC/Caveolin-1 pathway, leading to endothelial hyperpermeability. Mediates the loading of HMGB1 in extracellular vesicles (EVs) that shuttle HMGB1 to hepatocytes by transferrin-mediated endocytosis and subsequently promote hepatocyte pyroptosis by activating the NLRP3 inflammasome. Binds to DNA and promotes extracellular hypomethylated DNA (CpG DNA) uptake by cells via the endosomal route to activate inflammatory responses. Mediates phagocytosis by non-professional phagocytes (NPP) and this is enhanced by binding to ligands including RNA, DNA, HMGB1 and histones. Promotes NPP-mediated phagocytosis of Saccharomyces cerevisiae spores by binding to RNA attached to the spore wall. Also promotes NPP-mediated phagocytosis of apoptotic cells. Following DNA damage, recruited to DNA double-strand break sites where it colocalizes with the MRN repair complex via interaction with double-strand break repair protein MRE11. Enhances the endonuclease activity of MRE11, promoting the end resection of damaged DNA. Promotes DNA damage repair in trophoblasts which enhances trophoblast invasion and contributes to placental development and maintenance. Protects cells from DNA replication stress by localizing to damaged replication forks where it stabilizes the MCM2-7 complex and promotes faithful progression of the replication fork. Mediates the production of reactive oxygen species (ROS) in human endothelial cells. The sequence is that of Advanced glycosylation end product-specific receptor (AGER) from Homo sapiens (Human).